The following is a 200-amino-acid chain: Small ribosomal subunit protein uS4 (200 aa).

Residues 20–41 (TGTGKELDKRPYAPGQHGPNQR) are disordered. The S4 RNA-binding domain maps to 92–152 (SRLDNLVYRL…EKSKNLDVVK (61 aa)).

Belongs to the universal ribosomal protein uS4 family. Part of the 30S ribosomal subunit. Contacts protein S5. The interaction surface between S4 and S5 is involved in control of translational fidelity.

Functionally, one of the primary rRNA binding proteins, it binds directly to 16S rRNA where it nucleates assembly of the body of the 30S subunit. In terms of biological role, with S5 and S12 plays an important role in translational accuracy. This is Small ribosomal subunit protein uS4 from Oceanobacillus iheyensis (strain DSM 14371 / CIP 107618 / JCM 11309 / KCTC 3954 / HTE831).